The chain runs to 415 residues: Diaminopimelate decarboxylase (415 aa).

Residue K54 is modified to N6-(pyridoxal phosphate)lysine. Pyridoxal 5'-phosphate-binding positions include G223 and E264–R267. Residues R267, R303, and Y307 each coordinate substrate. C338 (proton donor) is an active-site residue. Residues E339 and Y374 each coordinate substrate. Pyridoxal 5'-phosphate is bound at residue Y374.

This sequence belongs to the Orn/Lys/Arg decarboxylase class-II family. LysA subfamily. In terms of assembly, homodimer. It depends on pyridoxal 5'-phosphate as a cofactor.

The catalysed reaction is meso-2,6-diaminopimelate + H(+) = L-lysine + CO2. It functions in the pathway amino-acid biosynthesis; L-lysine biosynthesis via DAP pathway; L-lysine from DL-2,6-diaminopimelate: step 1/1. Specifically catalyzes the decarboxylation of meso-diaminopimelate (meso-DAP) to L-lysine. This chain is Diaminopimelate decarboxylase, found in Buchnera aphidicola subsp. Acyrthosiphon pisum (strain APS) (Acyrthosiphon pisum symbiotic bacterium).